Consider the following 424-residue polypeptide: Serine--tRNA ligase (424 aa).

An L-serine-binding site is contributed by 229 to 231 (TAE). Position 260-262 (260-262 (RSE)) interacts with ATP. Glutamate 283 lines the L-serine pocket. Residue 347-350 (EISS) participates in ATP binding. Serine 383 contributes to the L-serine binding site.

Belongs to the class-II aminoacyl-tRNA synthetase family. Type-1 seryl-tRNA synthetase subfamily. In terms of assembly, homodimer. The tRNA molecule binds across the dimer.

The protein resides in the cytoplasm. It catalyses the reaction tRNA(Ser) + L-serine + ATP = L-seryl-tRNA(Ser) + AMP + diphosphate + H(+). The catalysed reaction is tRNA(Sec) + L-serine + ATP = L-seryl-tRNA(Sec) + AMP + diphosphate + H(+). It participates in aminoacyl-tRNA biosynthesis; selenocysteinyl-tRNA(Sec) biosynthesis; L-seryl-tRNA(Sec) from L-serine and tRNA(Sec): step 1/1. In terms of biological role, catalyzes the attachment of serine to tRNA(Ser). Is also able to aminoacylate tRNA(Sec) with serine, to form the misacylated tRNA L-seryl-tRNA(Sec), which will be further converted into selenocysteinyl-tRNA(Sec). This chain is Serine--tRNA ligase, found in Gluconacetobacter diazotrophicus (strain ATCC 49037 / DSM 5601 / CCUG 37298 / CIP 103539 / LMG 7603 / PAl5).